A 326-amino-acid chain; its full sequence is Protein spaetzle (326 aa).

Positions 1–25 are cleaved as a signal peptide; that stretch reads MMTPMWISLFKVLLLLFAFFATYEA. An N-linked (GlcNAc...) asparagine glycan is attached at Asn-48. The interval 56–82 is disordered; the sequence is FMPIPTQHDDPTQKQKQNQNQSPIPET. A compositionally biased stretch (polar residues) spans 69 to 80; the sequence is KQKQNQNQSPIP. Residues Asn-114 and Asn-164 are each glycosylated (N-linked (GlcNAc...) asparagine). Residues 152-174 form a disordered region; the sequence is YRPPQSPARPLRNDTKEHNPCAK. The segment covering 162-174 has biased composition (basic and acidic residues); that stretch reads LRNDTKEHNPCAK. The region spanning 228–322 is the Spaetzle domain; that stretch reads FLCRSIRKLV…FKIPSCCKCA (95 aa). 3 disulfide bridges follow: Cys-230-Cys-288, Cys-267-Cys-319, and Cys-274-Cys-321.

In terms of assembly, homodimer; disulfide-linked. In the presence of Tl, crystal structures show one Tl molecule bound to a spaetzle C-106 homodimer. However, the active complex probably consists of two Tl molecules bound to a spaetzle C-106 homodimer. This is supported by in vitro experiments which also show binding of the spaetzle C-106 dimer to 2 Tl receptors. Ligand binding induces conformational changes in the extracellular domain of Tl. This may enable a secondary homodimerization interface at the C-terminus of the Tl extracellular domain. In terms of processing, during embryonic development proteolytically processed by activated ea/easter; ea cleaves the signal peptide and also generates the C-terminal 12 kDa active ligand for the Toll receptor, C-106 (except for isoform 8.24 and isoform 11.27 as they do not contain the cleavage site). During the immune response, cleaved in the same manner by SPE. Post-translationally, extracellular forms of isoform 8.19 and isoform 11.7 are glycosylated.

It localises to the secreted. Its function is as follows. The activated form, spaetzle C-106, acts as a ligand for the Toll receptor. Binding to Toll activates the Toll signaling pathway and induces expression of the antifungal peptide drosomycin. Component of the extracellular signaling pathway that establishes dorsal-ventral polarity in the embryo. The sequence is that of Protein spaetzle from Drosophila melanogaster (Fruit fly).